A 204-amino-acid polypeptide reads, in one-letter code: CASP-like protein 4B4 (204 aa).

Over 1–60 the chain is Cytoplasmic; sequence MSAAVAASSGAPAADVEKGAAAADANVDGGGAPAAAAASGEGVVSAVVRRWRRQDLLEKS. A helical transmembrane segment spans residues 61–81; the sequence is GSALRVAAWAFSLLAFVVMGA. Residues 82–98 are Extracellular-facing; that stretch reads NDHGDWRQFEHYEEYRY. A helical membrane pass occupies residues 99–119; sequence VVAIGVLAFIYTTLQLVRHGV. The Cytoplasmic segment spans residues 120 to 130; sequence RLTGGQDLQGK. The chain crosses the membrane as a helical span at residues 131 to 151; the sequence is VAVLVDFAGDQVTAYLLMSAV. Topologically, residues 152 to 175 are extracellular; it reads SAAIPITNRMREGADNVFTDSSAA. The chain crosses the membrane as a helical span at residues 176 to 196; it reads SISMAFFAFLCLALSALVSGF. The Cytoplasmic segment spans residues 197–204; that stretch reads KLAKQTYI.

This sequence belongs to the Casparian strip membrane proteins (CASP) family. As to quaternary structure, homodimer and heterodimers.

It is found in the cell membrane. The polypeptide is CASP-like protein 4B4 (Oryza sativa subsp. japonica (Rice)).